Reading from the N-terminus, the 517-residue chain is Beta-galactoside alpha-2,6-sialyltransferase 2 (517 aa).

The Cytoplasmic portion of the chain corresponds to 1–10 (MKPNLKQWKQ). A helical; Signal-anchor for type II membrane protein membrane pass occupies residues 11 to 31 (FMLFGICAWGLLFLVIFVYFT). Topologically, residues 32–517 (DSNSVEPVPS…IHCPIKDHIT (486 aa)) are lumenal. 3 N-linked (GlcNAc...) asparagine glycosylation sites follow: asparagine 201, asparagine 298, and asparagine 328. 3 disulfides stabilise this stretch: cysteine 244-cysteine 510, cysteine 287-cysteine 439, and cysteine 457-cysteine 468.

The protein belongs to the glycosyltransferase 29 family.

Its subcellular location is the golgi apparatus. The protein localises to the golgi stack membrane. It carries out the reaction a beta-D-galactoside + CMP-N-acetyl-beta-neuraminate = an N-acetyl-alpha-neuraminyl-(2-&gt;6)-beta-D-galactosyl derivative + CMP + H(+). Its function is as follows. Transfers sialic acid from the donor of substrate CMP-sialic acid to galactose containing acceptor substrates. This chain is Beta-galactoside alpha-2,6-sialyltransferase 2 (st6gal2), found in Xenopus tropicalis (Western clawed frog).